The primary structure comprises 322 residues: N-acetyl-gamma-glutamyl-phosphate reductase (322 aa).

The active site involves Cys132.

Belongs to the NAGSA dehydrogenase family. Type 1 subfamily.

The protein resides in the cytoplasm. It catalyses the reaction N-acetyl-L-glutamate 5-semialdehyde + phosphate + NADP(+) = N-acetyl-L-glutamyl 5-phosphate + NADPH + H(+). Its pathway is amino-acid biosynthesis; L-arginine biosynthesis; N(2)-acetyl-L-ornithine from L-glutamate: step 3/4. In terms of biological role, catalyzes the NADPH-dependent reduction of N-acetyl-5-glutamyl phosphate to yield N-acetyl-L-glutamate 5-semialdehyde. This Phocaeicola vulgatus (strain ATCC 8482 / DSM 1447 / JCM 5826 / CCUG 4940 / NBRC 14291 / NCTC 11154) (Bacteroides vulgatus) protein is N-acetyl-gamma-glutamyl-phosphate reductase.